A 398-amino-acid polypeptide reads, in one-letter code: Putative FBD-associated F-box protein At5g56700 (398 aa).

The region spanning 1 to 47 (MAKISDLSDELLVKILSFLPTKEAVSTSCLSKQWEFLWMWLSKLEFY) is the F-box domain. Residues 340–388 (WKNNKSSVPKCLLESLETFEFAGYIGTPEERDFLSYIFKHARCLKSSSI) enclose the FBD domain.

The protein is Putative FBD-associated F-box protein At5g56700 of Arabidopsis thaliana (Mouse-ear cress).